Here is a 280-residue protein sequence, read N- to C-terminus: uncharacterized protein (280 aa).

Basic and acidic residues-rich tracts occupy residues 110–122, 167–177, 223–261, and 269–280; these read EKQA…ERLQ, ATGEERAECGR, ARQH…RPQQ, and DVDRSKSCLEAE. Disordered stretches follow at residues 110 to 137, 151 to 177, and 219 to 280; these read EKQA…KTEH, HRGE…ECGR, and TIID…LEAE.

This is an uncharacterized protein from Agrobacterium vitis (Rhizobium vitis).